The following is a 133-amino-acid chain: uncharacterized protein (133 aa).

The HIT domain occupies 3-106 (IFTKIINREL…PTRSLSDFGF (104 aa)). The Histidine triad motif motif lies at 90–94 (HLHIH).

This is an uncharacterized protein from Mycobacterium tuberculosis (strain ATCC 25618 / H37Rv).